A 191-amino-acid chain; its full sequence is Calcium and integrin-binding protein 1 (191 aa).

The N-myristoyl glycine moiety is linked to residue Gly-2. EF-hand domains lie at 103-138 (TPDI…LTGE) and 148-183 (EMKQ…SPDF). Ca(2+) is bound by residues Asp-116, Asp-118, Asp-120, Thr-122, Asp-127, Asp-161, Asp-163, Asp-165, Thr-167, and Glu-172. Asp-118 is subject to Phosphoserine.

In terms of assembly, monomer. Interacts with MYO1C. Interacts (via C-terminal region) with PPP3R1 and CACNA1C; the interactions increase upon cardiomyocytes hypertrophy. Interacts with the heterodimeric integrin alpha-IIb/beta3 (ITGA2B-ITGB3). Interacts with ITGA2B (via cytoplasmic domain); the interaction is direct and calcium-dependent. Interacts with the protein kinases PLK2/SNK and PRKDC (via the region immediately upstream of the kinase domain). Interacts with PLK3; the interaction inhibits PLK3 kinase activity. Interacts with PSEN2. Interacts (via C-terminus) with F8. Interacts with NBR1 (via C-terminus). Interacts with FEZ1 (via C-terminus). Interacts with UBR5 (via C-terminus); the interaction is sensitive to DNA damage, and may target CIB1 for ubiquitin-mediated degradation. Interacts with IFI6; the interaction is direct. Interacts with BCL2. Interacts with ITPR3; the interaction occurs in a calcium-dependent manner. Interacts with PTK2/FAK1. Interacts with MAP3K5; the interaction inhibits MAP3K5 activation by phosphorylation, and its subsequent interaction with TRAF2. Isoform 2 interacts with PRKD2 (via N-terminal AP-rich region), PTK2/FAK1 and PAK1. Interacts with TAS1R2 (via C-terminus); the interaction is independent of the myristoylation state of CIB1. Interacts (via C-terminal region) with STMN2 (via the N-terminal region); the interaction is direct, occurs in a calcium-dependent manner and attenuates the STMN2-induced neurite outgrowth inhibition. Interacts with SPHK1, the interaction occurs in a calcium-dependent manner. Interacts with ITGA2B (via C-terminal cytoplasmic tail); the interaction occurs upon platelet aggregation and is stabilized/increased in a calcium and magnesium-dependent manner. Interacts with PAK1 (via N-terminal region); the interaction is direct and occurs in a calcium-dependent manner. Interacts with RAC3 (via C-terminal region); the interaction induces their association with the cytoskeleton upon alpha-IIb/beta3 integrin-mediated adhesion. Interacts with ITGA5 and ITGAV. Interacts and forms a complex with TMC6 and TMC8; the interaction stabilizes each component of the complex. As to quaternary structure, (Microbial infection) Interacts with human papillomavirus 4/HPV4 protein E8, human papillomavirus 5/HPV5 protein E1, and human papillomavirus 16/HPV16 proteins E2 and E5. In terms of processing, phosphorylation of isoform 2 at Ser-118 by PRKD2 increases its ability to stimulate tumor angiogenesis. In terms of tissue distribution, ubiquitously expressed. Expressed in the epidermis, hair follicles and keratinocytes. Detected in platelets and in cell lines of megakaryocytic and erythrocytic lineages. Both isoform 1 and isoform 2 are detected in various cancer cell lines, with isoform 2 being the predominant form (at protein level).

The protein resides in the membrane. It localises to the cell membrane. Its subcellular location is the sarcolemma. The protein localises to the apical cell membrane. It is found in the cell projection. The protein resides in the ruffle membrane. It localises to the filopodium tip. Its subcellular location is the growth cone. The protein localises to the lamellipodium. It is found in the cytoplasm. The protein resides in the cytoskeleton. It localises to the microtubule organizing center. Its subcellular location is the centrosome. The protein localises to the perinuclear region. It is found in the nucleus. The protein resides in the neuron projection. It localises to the perikaryon. Its subcellular location is the golgi apparatus. The protein localises to the trans-Golgi network. Calcium-binding protein that plays a role in the regulation of numerous cellular processes, such as cell differentiation, cell division, cell proliferation, cell migration, thrombosis, angiogenesis, cardiac hypertrophy and apoptosis. Involved in bone marrow megakaryocyte differentiation by negatively regulating thrombopoietin-mediated signaling pathway. Participates in the endomitotic cell cycle of megakaryocyte, a form of mitosis in which both karyokinesis and cytokinesis are interrupted. Plays a role in integrin signaling by negatively regulating alpha-IIb/beta3 activation in thrombin-stimulated megakaryocytes preventing platelet aggregation. Up-regulates PTK2/FAK1 activity, and is also needed for the recruitment of PTK2/FAK1 to focal adhesions; it thus appears to play an important role in focal adhesion formation. Positively regulates cell migration on fibronectin in a CDC42-dependent manner, the effect being negatively regulated by PAK1. Functions as a negative regulator of stress activated MAP kinase (MAPK) signaling pathways. Down-regulates inositol 1,4,5-trisphosphate receptor-dependent calcium signaling. Involved in sphingosine kinase SPHK1 translocation to the plasma membrane in a N-myristoylation-dependent manner preventing TNF-alpha-induced apoptosis. Regulates serine/threonine-protein kinase PLK3 activity for proper completion of cell division progression. Plays a role in microtubule (MT) dynamics during neuronal development; disrupts the MT depolymerization activity of STMN2 attenuating NGF-induced neurite outgrowth and the MT reorganization at the edge of lamellipodia. Promotes cardiomyocyte hypertrophy via activation of the calcineurin/NFAT signaling pathway. Stimulates calcineurin PPP3R1 activity by mediating its anchoring to the sarcolemma. In ischemia-induced (pathological or adaptive) angiogenesis, stimulates endothelial cell proliferation, migration and microvessel formation by activating the PAK1 and ERK1/ERK2 signaling pathway. Also promotes cancer cell survival and proliferation. May regulate cell cycle and differentiation of spermatogenic germ cells, and/or differentiation of supporting Sertoli cells. Forms a complex with TMC6/EVER1 and TMC8/EVER2 in lymphocytes and keratynocytes where CIB1 stabilizes TMC6 and TMC8 levels and reciprocally. In terms of biological role, acts as a restriction factor that promotes keratinocyte-intrinsic immunity to human beta-papillomaviruses (HPVs). Functionally, plays a regulatory role in angiogenesis and tumor growth by mediating PKD/PRKD2-induced vascular endothelial growth factor A (VEGFA) secretion. The protein is Calcium and integrin-binding protein 1 (CIB1) of Homo sapiens (Human).